Here is a 113-residue protein sequence, read N- to C-terminus: UPF0482 protein YnfB (113 aa).

The signal sequence occupies residues methionine 1 to alanine 28.

This sequence belongs to the UPF0482 family.

This Salmonella arizonae (strain ATCC BAA-731 / CDC346-86 / RSK2980) protein is UPF0482 protein YnfB.